The following is an 80-amino-acid chain: DNA-directed RNA polymerase RPB10 homolog (80 aa).

Residues Cys7, Cys10, Cys65, and Cys66 each contribute to the Zn(2+) site.

It belongs to the archaeal RpoN/eukaryotic RPB10 RNA polymerase subunit family. As to quaternary structure, part of the viral DNA-directed RNA polymerase that consists of 8 polII-like subunits (RPB1, RPB2, RPB3, RPB5, RPB6, RPB7, RPB9, RPB10), a capping enzyme and a termination factor.

The protein localises to the host cytoplasm. Component of the DNA-directed RNA polymerase (RNAP) that catalyzes the transcription in the cytoplasm of viral DNA into RNA using the four ribonucleoside triphosphates as substrates. The protein is DNA-directed RNA polymerase RPB10 homolog of African swine fever virus (isolate Pig/Kenya/KEN-50/1950) (ASFV).